Consider the following 452-residue polypeptide: mRNA export factor ICP27 homolog (452 aa).

The interval 42 to 164 (EAIGSTPGED…RNDQTHDESY (123 aa)) is disordered. Over residues 98–107 (SNHHGGRDVE) the composition is skewed to basic and acidic residues. The span at 129-144 (SRKHRDRSLSNRRRRP) shows a compositional bias: basic residues. The span at 154–164 (ERNDQTHDESY) shows a compositional bias: basic and acidic residues. Residues Cys335, His417, Cys421, and Cys426 each contribute to the Zn(2+) site. The segment at 335 to 426 (CLLLNRDNDL…HQRECGRVEC (92 aa)) adopts a CHC2-type zinc-finger fold.

Belongs to the HHV-1 ICP27 protein family. As to quaternary structure, homodimer. Homodimerization is required for transactivation. Associates in a complex with RNA, and host export factors NXF1/TAP and ALYREF; these interactions allow nuclear export of viral transcripts. Interacts with three host shuttling SR proteins SRSF1, SRSF3 and SRSF7. Interacts with host SRPK1. Interacts with IE62; this interaction enhances IE62 transactivation. Post-translationally, phosphorylated in vitro by SRPK1.

It localises to the host cytoplasm. The protein localises to the host nucleus. In terms of biological role, multifunctional regulator of the expression of viral genes that mediates nuclear export of viral intronless mRNAs. This immediate early (EI) protein promotes the nuclear export of viral intronless mRNAs by interacting with mRNAs and host NXF1/TAP. This is mRNA export factor ICP27 homolog from Varicella-zoster virus (strain Dumas) (HHV-3).